The sequence spans 343 residues: Cytoplasmic tRNA 2-thiolation protein 1 (343 aa).

Belongs to the TtcA family. CTU1/NCS6/ATPBD3 subfamily.

It is found in the cytoplasm. The protein operates within tRNA modification; 5-methoxycarbonylmethyl-2-thiouridine-tRNA biosynthesis. Functionally, plays a central role in 2-thiolation of mcm(5)S(2)U at tRNA wobble positions of tRNA(Lys), tRNA(Glu) and tRNA(Gln). Directly binds tRNAs and probably acts by catalyzing adenylation of tRNAs, an intermediate required for 2-thiolation. It is unclear whether it acts as a sulfurtransferase that transfers sulfur from thiocarboxylated URM1 onto the uridine of tRNAs at wobble position. This chain is Cytoplasmic tRNA 2-thiolation protein 1, found in Drosophila melanogaster (Fruit fly).